Consider the following 589-residue polypeptide: Protein FAM161B (589 aa).

3 disordered regions span residues 1–166 (MTVG…VCSW), 265–297 (KKEQ…RKIP), and 386–444 (AERR…GLAS). A compositionally biased stretch (acidic residues) spans 92–106 (PDSDLNDAEDEEDLE). Over residues 151-166 (TSDSGPPSQHRSVCSW) the composition is skewed to polar residues. The span at 265–275 (KKEQQKEDAPQ) shows a compositional bias: basic and acidic residues. The span at 287–297 (SPKKATSRKIP) shows a compositional bias: basic residues. The segment covering 386-396 (AERRETRETTR) has biased composition (basic and acidic residues). Residues 510-577 (EEVFKAKLKE…ALKQAGLEEE (68 aa)) are a coiled coil.

The protein belongs to the FAM161 family. In terms of assembly, interacts with FAM161A.

The polypeptide is Protein FAM161B (Fam161b) (Mus musculus (Mouse)).